We begin with the raw amino-acid sequence, 588 residues long: Outer membrane transporter CdiB (588 aa).

Residues Val-33–Leu-55 traverse the membrane as a helical segment. Residues Phe-104–Gly-179 form the POTRA domain.

It belongs to the TPS (TC 1.B.20) family.

Its subcellular location is the cell outer membrane. Functionally, potential outer membrane protein component of a toxin-immunity protein module, which functions as a cellular contact-dependent growth inhibition (CDI) system. CDI modules allow bacteria to communicate with and inhibit the growth of closely related neighboring bacteria in a contact-dependent fashion. This protein may be required for secretion and assembly of the CdiA toxin protein. In terms of biological role, probable member of a two partner secretion pathway (TPS) in which it mediates the secretion of CdiA. This chain is Outer membrane transporter CdiB, found in Escherichia coli O6:K15:H31 (strain 536 / UPEC).